The chain runs to 498 residues: Guanosine-5'-triphosphate,3'-diphosphate pyrophosphatase (498 aa).

Belongs to the GppA/Ppx family. GppA subfamily.

The enzyme catalyses guanosine 3'-diphosphate 5'-triphosphate + H2O = guanosine 3',5'-bis(diphosphate) + phosphate + H(+). It participates in purine metabolism; ppGpp biosynthesis; ppGpp from GTP: step 2/2. Functionally, catalyzes the conversion of pppGpp to ppGpp. Guanosine pentaphosphate (pppGpp) is a cytoplasmic signaling molecule which together with ppGpp controls the 'stringent response', an adaptive process that allows bacteria to respond to amino acid starvation, resulting in the coordinated regulation of numerous cellular activities. The chain is Guanosine-5'-triphosphate,3'-diphosphate pyrophosphatase from Pectobacterium atrosepticum (strain SCRI 1043 / ATCC BAA-672) (Erwinia carotovora subsp. atroseptica).